The sequence spans 221 residues: MNITKIDWQKVNGLLPVIIQNISTREVLMLGYMNEEALTKTIKERKVTFFSRTKQRLWTKGEISGNFLNVEEMSLDCDNDTLLILVDPIGATCHTGEYSCFHQFTSPQSENKKQQFANWAWFIKLEQHLKEKKNADPSNSYTATLHAKGTKKIAQKVGEEGVETALAAVAQDKAEVISEATDLVYHLTVLLHNQDLQWYEIIAKLQERHQGIGLHPEGGNK.

Residues 1-121 (MNITKIDWQK…KKQQFANWAW (121 aa)) form a phosphoribosyl-AMP cyclohydrolase region. Residues 122-221 (FIKLEQHLKE…IGLHPEGGNK (100 aa)) are phosphoribosyl-ATP pyrophosphohydrolase.

This sequence in the N-terminal section; belongs to the PRA-CH family. The protein in the C-terminal section; belongs to the PRA-PH family.

It is found in the cytoplasm. The catalysed reaction is 1-(5-phospho-beta-D-ribosyl)-ATP + H2O = 1-(5-phospho-beta-D-ribosyl)-5'-AMP + diphosphate + H(+). The enzyme catalyses 1-(5-phospho-beta-D-ribosyl)-5'-AMP + H2O = 1-(5-phospho-beta-D-ribosyl)-5-[(5-phospho-beta-D-ribosylamino)methylideneamino]imidazole-4-carboxamide. Its pathway is amino-acid biosynthesis; L-histidine biosynthesis; L-histidine from 5-phospho-alpha-D-ribose 1-diphosphate: step 2/9. It functions in the pathway amino-acid biosynthesis; L-histidine biosynthesis; L-histidine from 5-phospho-alpha-D-ribose 1-diphosphate: step 3/9. This is Histidine biosynthesis bifunctional protein HisIE (hisI) from Haemophilus influenzae (strain ATCC 51907 / DSM 11121 / KW20 / Rd).